Consider the following 1403-residue polypeptide: MSASGDGTRVPPKSKGKTLSSFFGSLPGFSSARNLVSHTHSSTSTKDLQTATDPSGTPAPSSKVSTNSQMAGDAAGLLQPSEQTAGDKDMGSFSVTSSEDAFSGVFGIMDAAKGMVQGGLGATQSALVGTKEAVSGGVMGAVGVAKGLVKGGLDTSKNVLTNTKDTVTTGVMGAANMAKGTVQTGLDTTKSVVMGTKDTVATGLAGAVNVAKGTIQGGLDTTKSVVMGTKDTVTTGLTGAVNVAKGVVQGGLDTTKSVVMGTKDTVTTGLTGAMNVAKGTAQMGIDTSKTVLTGTKDTVCAGATGAINVAKGAAQGGLDTTKSVLIGTKDTVTTGLTGAVNVAKGAVQGGLDTTKSVVMGTKDTVTTGLTGAMNVAKGTAQMGLGTSKTVLTGTKDTVCAGLTGAINVAKGAAQGGLDTTKSVLMGTKDTVTTGLTGAVNVAKGTIQGGLDTTKSVVMGTKDTVTTGLTGAVNVAKGTIQGGLDTTKSVVMGTKDTVTTGLTGAVNVAKGAAQGGLDTTKSVVMGTKDTVTTGLTGAMNVAKGTAQMGLGTSKTVLTGTKDTVCAGLTGAINVAKGAAQGGLDTTKSVLMGTKDTVTTGLTGAVNVAKGTIQGGLDTTKSVVMGTKDTVTTGLTGAVNVAKGAVQGGLDTTKSVVMGTKDTVTTGLTGALNVAKGTAQMGIDTSKTVLIGTKDTVCAGATGAINMAKGAAQGGLDTTKSVLMGTKDTVTTGLTGAINVAKGSAQGGLDTTKSVLIGTKDTVTTGLTGALNVAKGTVQTGLDTSQRVLTGTKDNVYAGVTGAVNVAKGTIQGGLDTTKSVVMGTKDTVTTGLTGAVNVAKGAVQGGLDTTKSVVMGTKDTVTTGLTGAMNVAKGTAQMGIDTSKTVLTGTKDTVCAGLTGAINVAKGATQGGLDTTKSVLMGTKDTVTTGLTGAINVAKGAAQGGLDTTKSVLLGTKDTVTTGLTGAANVAKETVQMGLDTSKNILMDTKDSICAGATGAITVVKGAAQGGLDTSNAALTGTMDTAKGTVQTSLDTSKHMLIGMKDTVCAGVTSAMNMAKGIHKNTDTTRDTQSSVLAHSGNVATNAIHTGVHTVPSSLSGSHSIICHEPSIYRATNHGVGQAILTSTESLCCETSSFSDKYGLGHVTEPRADTKTLVSGMASSACAATRSVEECGQLAATGFAALPDELKGLGDIFQPMTTEEQAQLAVSESGPRVLSADRGSYYIRLGDLAPSFRQRAFEHALSHIQHNQFQARAALAQLQEAFQMTDMTMEAACGKLCSDQSLNTMVEAVGSHEMRASVAQDRLCTLAHQLHAAYSSLVTSLQGLPEVQQQAGQARHSLCKLYGLVSSEAGSELQTEQLAQSSAGVVEAWQGLEVLLEKLQQNPPLSWLVGPFTSMPCGQL.

The tract at residues 1 to 21 is disordered; the sequence is MSASGDGTRVPPKSKGKTLSS. Ser-25 and Ser-31 each carry phosphoserine. The interval 33 to 70 is disordered; sequence RNLVSHTHSSTSTKDLQTATDPSGTPAPSSKVSTNSQM. 29 repeat units span residues 104–136, 137–169, 170–202, 203–235, 236–268, 269–301, 302–334, 335–367, 368–400, 401–433, 434–466, 467–499, 500–532, 533–565, 566–598, 599–631, 632–664, 665–697, 698–730, 731–763, 764–796, 797–829, 830–862, 863–895, 896–928, 929–961, 962–994, 995–1027, and 1028–1060. The segment at 104-1060 is 29 X 33 AA approximate tandem repeat; the sequence is GVFGIMDAAK…VTSAMNMAKG (957 aa). The residue at position 1281 (Ser-1281) is a Phosphoserine. Phosphothreonine is present on Thr-1287.

This sequence belongs to the perilipin family. Specifically expressed in white adipose tissue and also weakly detected in heart and skeletal muscle (at protein level).

The protein resides in the cell membrane. It localises to the cytoplasm. It is found in the lipid droplet. Functionally, may play a role in triacylglycerol packaging into adipocytes. May function as a coat protein involved in the biogenesis of lipid droplets. The chain is Perilipin-4 (Plin4) from Mus musculus (Mouse).